Reading from the N-terminus, the 279-residue chain is Apolipoprotein L domain-containing protein 1 (279 aa).

3 consecutive transmembrane segments (helical) span residues 83–105 (SLVANVAGSSLSATGALAAIVGL), 122–142 (GLGVATAGGAVTITSDLSLIF), and 192–212 (IALYNSVYFIVFFGSRGFLIP). Residues 226–253 (LKAKIQKLAESLESCTGALDELSEQLES) are a coiled coil.

The protein belongs to the apolipoprotein L family. In terms of tissue distribution, expressed in neonatal dermal microvascular endothelial cells.

The protein resides in the cell membrane. The protein localises to the cell junction. It is found in the cytoplasmic vesicle. It localises to the secretory vesicle. Functionally, is a modulator of endothelial barrier permeability, required for proper organization of endothelial cell-cell junctions and cytoskeleton. It also plays a role in the modulation of secretory autophagy. May affect blood-brain barrier permeability. The polypeptide is Apolipoprotein L domain-containing protein 1 (APOLD1) (Homo sapiens (Human)).